We begin with the raw amino-acid sequence, 361 residues long: Phospho-N-acetylmuramoyl-pentapeptide-transferase (361 aa).

10 helical membrane-spanning segments follow: residues 25-45 (TGGA…WIIN), 72-92 (TPTM…VLWA), 95-115 (VNPY…VGFY), 133-153 (TRLL…VWLG), 169-189 (VVLN…VGAG), 200-220 (GLAI…AYLA), 240-260 (LAVL…FNAP), 264-284 (IFMG…IAVA), 289-309 (IVLA…IVQV), and 338-358 (QIVI…LATL).

This sequence belongs to the glycosyltransferase 4 family. MraY subfamily. Requires Mg(2+) as cofactor.

It is found in the cell inner membrane. It carries out the reaction UDP-N-acetyl-alpha-D-muramoyl-L-alanyl-gamma-D-glutamyl-meso-2,6-diaminopimeloyl-D-alanyl-D-alanine + di-trans,octa-cis-undecaprenyl phosphate = di-trans,octa-cis-undecaprenyl diphospho-N-acetyl-alpha-D-muramoyl-L-alanyl-D-glutamyl-meso-2,6-diaminopimeloyl-D-alanyl-D-alanine + UMP. Its pathway is cell wall biogenesis; peptidoglycan biosynthesis. Its function is as follows. Catalyzes the initial step of the lipid cycle reactions in the biosynthesis of the cell wall peptidoglycan: transfers peptidoglycan precursor phospho-MurNAc-pentapeptide from UDP-MurNAc-pentapeptide onto the lipid carrier undecaprenyl phosphate, yielding undecaprenyl-pyrophosphoryl-MurNAc-pentapeptide, known as lipid I. The chain is Phospho-N-acetylmuramoyl-pentapeptide-transferase from Rhodopseudomonas palustris (strain BisB5).